A 602-amino-acid polypeptide reads, in one-letter code: uncharacterized protein (602 aa).

Residues 51 to 210 (QYLGTQPRDF…PFVSYQPDAD (160 aa)) form the Helicase ATP-binding domain. The segment covering 430-439 (PHRESAHDPL) has biased composition (basic and acidic residues). Disordered stretches follow at residues 430–452 (PHRE…TERG) and 518–538 (RAQL…ASVH). The span at 523–534 (KGATQPATSGAS) shows a compositional bias: polar residues.

The protein to M.leprae ML1624.

This is an uncharacterized protein from Mycobacterium tuberculosis (strain CDC 1551 / Oshkosh).